We begin with the raw amino-acid sequence, 375 residues long: Anhydro-N-acetylmuramic acid kinase (375 aa).

Residue 18–25 (GTSMDGID) participates in ATP binding.

The protein belongs to the anhydro-N-acetylmuramic acid kinase family.

It carries out the reaction 1,6-anhydro-N-acetyl-beta-muramate + ATP + H2O = N-acetyl-D-muramate 6-phosphate + ADP + H(+). It functions in the pathway amino-sugar metabolism; 1,6-anhydro-N-acetylmuramate degradation. It participates in cell wall biogenesis; peptidoglycan recycling. Functionally, catalyzes the specific phosphorylation of 1,6-anhydro-N-acetylmuramic acid (anhMurNAc) with the simultaneous cleavage of the 1,6-anhydro ring, generating MurNAc-6-P. Is required for the utilization of anhMurNAc either imported from the medium or derived from its own cell wall murein, and thus plays a role in cell wall recycling. In Rhodospirillum rubrum (strain ATCC 11170 / ATH 1.1.1 / DSM 467 / LMG 4362 / NCIMB 8255 / S1), this protein is Anhydro-N-acetylmuramic acid kinase.